The sequence spans 623 residues: MATPSRTSWADVADADPAPAPAPAANGPARPDRSSYVPPHLRNRGASSGGGAAAPPPSSSSSSAPPPRAAPGLLAPRPAAAGMGRMGGGGGGGGFGGPRRWDREPNPFGNDGDAAAGAGDEPEVFDAHQNTGINFDAYEDIPVETSGREVPPPVGTFAEIDLGQALNDNIRRCKYVRPTPVQRYAIPISLAGRDLMACAQTGSGKTAAFCFPIISGIMRGPPAQRPQRGGMRTACPLALILSPTRELSMQIHEEARKFSYQTGVRVVVAYGGAPINQQLRDLERGVDILVATPGRLVDLLERARVSLQSIRYLALDEADRMLDMGFEPQVRRIVEQMDMPPPGARQTMLFSATFPKEIQRMASDFLENYIFLAVGRVGSSTDLIVQRVEFVQEADKRSHLMDLLHAQRDSATPGKPTLTLVFVETKRGADSLEHWLCMNGFPATSIHGDRNQQEREYALRSFKSGHTPILVATDVAARGLDIPHVAHVVNFDLPNDIDDYVHRIGRTGRAGKSGLATAFFNENNSSMARSLAELMQESNQEVPAWLSRYAARPSYGGGGGRNRRSGGGSRFGGRDFRRDSSSGRGGGDYYGGGSSGGAGGYGGSSAYGGGGYGGGAGAPSAWD.

The tract at residues 1-120 (MATPSRTSWA…DGDAAAGAGD (120 aa)) is disordered. Positions 10–29 (ADVADADPAPAPAPAANGPA) are enriched in low complexity. The segment covering 54–69 (APPPSSSSSSAPPPRA) has biased composition (pro residues). Positions 70–83 (APGLLAPRPAAAGM) are enriched in low complexity. A compositionally biased stretch (gly residues) spans 84–97 (GRMGGGGGGGGFGG). A Q motif motif is present at residues 155-183 (GTFAEIDLGQALNDNIRRCKYVRPTPVQR). The Helicase ATP-binding domain occupies 186-372 (IPISLAGRDL…SDFLENYIFL (187 aa)). 199–206 (AQTGSGKT) serves as a coordination point for ATP. Residues 316–319 (DEAD) carry the DEAD box motif. One can recognise a Helicase C-terminal domain in the interval 399–550 (HLMDLLHAQR…EVPAWLSRYA (152 aa)). A disordered region spans residues 553–595 (PSYGGGGGRNRRSGGGSRFGGRDFRRDSSSGRGGGDYYGGGSS). Residues 555-571 (YGGGGGRNRRSGGGSRF) show a composition bias toward gly residues. Positions 572 to 581 (GGRDFRRDSS) are enriched in basic and acidic residues. The segment covering 583 to 595 (GRGGGDYYGGGSS) has biased composition (gly residues).

This sequence belongs to the DEAD box helicase family. DDX3/DED1 subfamily.

It catalyses the reaction ATP + H2O = ADP + phosphate + H(+). The polypeptide is DEAD-box ATP-dependent RNA helicase 52C (Oryza sativa subsp. japonica (Rice)).